Reading from the N-terminus, the 163-residue chain is Troponin C, skeletal muscle (163 aa).

Ala2 bears the Blocked amino end (Ala) mark. EF-hand domains are found at residues Glu18–Asn53, Pro54–Glu89, Lys94–His129, and Val130–Gln163. Asp31, Asp33, Asp37, Glu42, Asp67, Asp69, Ser71, Thr73, Glu78, Asp107, Asn109, Asp111, Glu118, Asp143, Asn145, Asp147, Arg149, and Glu154 together coordinate Ca(2+).

This sequence belongs to the troponin C family.

Functionally, troponin is the central regulatory protein of striated muscle contraction. Tn consists of three components: Tn-I which is the inhibitor of actomyosin ATPase, Tn-T which contains the binding site for tropomyosin and Tn-C. The binding of calcium to Tn-C abolishes the inhibitory action of Tn on actin filaments. The sequence is that of Troponin C, skeletal muscle (TNNC2) from Gallus gallus (Chicken).